The sequence spans 355 residues: Hyaluronan and proteoglycan link protein 1 (355 aa).

The propeptide occupies M1–L9. N-linked (GlcNAc...) asparagine glycosylation is found at N21 and N56. The Ig-like V-type domain occupies P38–N156. Disulfide bonds link C61–C140, C182–C253, C206–C227, C280–C350, and C305–C326. 2 consecutive Link domains span residues V160–T255 and G260–R352.

This sequence belongs to the HAPLN family.

It is found in the secreted. Its subcellular location is the extracellular space. The protein localises to the extracellular matrix. Stabilizes the aggregates of proteoglycan monomers with hyaluronic acid in the extracellular cartilage matrix. This Gallus gallus (Chicken) protein is Hyaluronan and proteoglycan link protein 1 (HAPLN1).